The following is a 217-amino-acid chain: Vesicle-associated membrane protein 723 (217 aa).

Residues Met-1 to Leu-192 lie on the Cytoplasmic side of the membrane. The region spanning Phe-10–Leu-114 is the Longin domain. The v-SNARE coiled-coil homology domain maps to Asn-130–Gln-186. The chain crosses the membrane as a helical; Anchor for type IV membrane protein span at residues Ile-193–Phe-213. The Vesicular segment spans residues Asn-214–Lys-217.

The protein belongs to the synaptobrevin family. Highly expressed in stems and roots. Detected in flowers and leaves.

The protein localises to the endoplasmic reticulum membrane. In terms of biological role, involved in the targeting and/or fusion of transport vesicles to their target membrane. The polypeptide is Vesicle-associated membrane protein 723 (Arabidopsis thaliana (Mouse-ear cress)).